A 529-amino-acid polypeptide reads, in one-letter code: Zinc finger protein 572 (529 aa).

The segment at 1-125 is disordered; sequence MEQEQKLLVS…TGPAGQQNPS (125 aa). A Glycyl lysine isopeptide (Lys-Gly) (interchain with G-Cter in SUMO2) cross-link involves residue K6. A compositionally biased stretch (polar residues) spans 22 to 42; that stretch reads KNTITGDESKNNLKTVQFSNS. Over residues 43–68 the composition is skewed to basic and acidic residues; it reads KADKERASKWSRSDGPENYKDEDTKE. Residues 87-96 show a composition bias toward polar residues; that stretch reads NDSNLGSQRN. C2H2-type zinc fingers lie at residues 131 to 153, 159 to 181, 187 to 209, 215 to 237, 243 to 265, 271 to 293, 299 to 321, 327 to 349, 383 to 405, 411 to 433, 439 to 461, and 467 to 489; these read YKCS…QRTH, YRCS…LRTH, YQCG…ERTH, YKCP…HRSH, YECP…QRTH, YKCP…QRTH, YKCP…QRIH, YQCI…QKMH, YKCC…QRTH, YRCS…QRTH, YKCP…RRTH, and YKCT…RKIH.

This sequence belongs to the krueppel C2H2-type zinc-finger protein family.

It localises to the nucleus. Its function is as follows. May be involved in transcriptional regulation. The sequence is that of Zinc finger protein 572 (ZNF572) from Bos taurus (Bovine).